Reading from the N-terminus, the 158-residue chain is NAD(P)H-quinone oxidoreductase subunit J, chloroplastic (158 aa).

It belongs to the complex I 30 kDa subunit family. NDH is composed of at least 16 different subunits, 5 of which are encoded in the nucleus.

It is found in the plastid. Its subcellular location is the chloroplast thylakoid membrane. The catalysed reaction is a plastoquinone + NADH + (n+1) H(+)(in) = a plastoquinol + NAD(+) + n H(+)(out). The enzyme catalyses a plastoquinone + NADPH + (n+1) H(+)(in) = a plastoquinol + NADP(+) + n H(+)(out). In terms of biological role, NDH shuttles electrons from NAD(P)H:plastoquinone, via FMN and iron-sulfur (Fe-S) centers, to quinones in the photosynthetic chain and possibly in a chloroplast respiratory chain. The immediate electron acceptor for the enzyme in this species is believed to be plastoquinone. Couples the redox reaction to proton translocation, and thus conserves the redox energy in a proton gradient. The sequence is that of NAD(P)H-quinone oxidoreductase subunit J, chloroplastic from Olimarabidopsis pumila (Dwarf rocket).